A 258-amino-acid chain; its full sequence is UPF0246 protein mma_1385 (258 aa).

It belongs to the UPF0246 family.

In Janthinobacterium sp. (strain Marseille) (Minibacterium massiliensis), this protein is UPF0246 protein mma_1385.